A 159-amino-acid chain; its full sequence is Major allergen Mal d 1 (159 aa).

Belongs to the BetVI family.

This Malus domestica (Apple) protein is Major allergen Mal d 1.